A 92-amino-acid chain; its full sequence is Small ribosomal subunit protein uS19c (92 aa).

It belongs to the universal ribosomal protein uS19 family.

The protein localises to the plastid. The protein resides in the chloroplast. Protein S19 forms a complex with S13 that binds strongly to the 16S ribosomal RNA. This chain is Small ribosomal subunit protein uS19c, found in Coffea arabica (Arabian coffee).